The following is a 91-amino-acid chain: Acylphosphatase (91 aa).

The region spanning 4–91 (RYLIKVLGRV…DNEKSFKIVY (88 aa)) is the Acylphosphatase-like domain. Catalysis depends on residues R19 and N37.

It belongs to the acylphosphatase family.

The enzyme catalyses an acyl phosphate + H2O = a carboxylate + phosphate + H(+). This is Acylphosphatase (acyP) from Clostridium acetobutylicum (strain ATCC 824 / DSM 792 / JCM 1419 / IAM 19013 / LMG 5710 / NBRC 13948 / NRRL B-527 / VKM B-1787 / 2291 / W).